The primary structure comprises 335 residues: Ficolin-1 (335 aa).

An N-terminal signal peptide occupies residues 1–17 (MWWPMLWAFPVLLCLCS). The interval 47–114 (SCPSFPGPPG…TASPLGQKEL (68 aa)) is disordered. Positions 50 to 88 (SFPGPPGPKGEPGSPAGRGERGLQGSPGKMGPPGSKGEP) constitute a Collagen-like domain. Residues 75 to 88 (SPGKMGPPGSKGEP) show a composition bias toward low complexity. A Fibrinogen C-terminal domain is found at 117-335 (ALCRRGPRSC…KVAEMKIRAS (219 aa)). 2 disulfides stabilise this stretch: Cys119-Cys147 and Cys126-Cys154. The interval 123–162 (PRSCKDLLTRGIFLTGWYTIYLPDCRPLTVLCDMDVDGGG) is a domain; contributes to trimerization. A b domain; contributes to trimerization region spans residues 163–251 (WTVFQRRVDG…LTLGQFLEGT (89 aa)). Asp270 is a Ca(2+) binding site. A glycan (N-linked (GlcNAc...) asparagine) is linked at Asn271. Position 272 (Asp272) interacts with Ca(2+). Cys279 and Cys292 form a disulfide bridge. An a carbohydrate-binding site is contributed by 291-293 (DCH). The segment at 326-335 (KVAEMKIRAS) is p domain.

Belongs to the ficolin lectin family. As to quaternary structure, homotrimer. Interacts with elastin/ELN. Interacts (via Fibrinogen C-terminal domain) with FFAR2. Interacts with CRP; may regulate monocyte activation by FCN1.

The protein resides in the secreted. Its subcellular location is the cell membrane. Extracellular lectin functioning as a pattern-recognition receptor in innate immunity. Binds the sugar moieties of pathogen-associated molecular patterns (PAMPs) displayed on microbes and activates the lectin pathway of the complement system. May also activate monocytes through a G protein-coupled receptor, FFAR2, inducing the secretion of interleukin-8/IL-8. Binds preferentially to 9-O-acetylated 2-6-linked sialic acid derivatives and to various glycans containing sialic acid engaged in a 2-3 linkage. The chain is Ficolin-1 (Fcn1) from Rattus norvegicus (Rat).